The chain runs to 221 residues: Kinetochore protein Spc25 (221 aa).

A coiled-coil region spans residues 63–114; that stretch reads VIQRREEMEKRVSFMEELAQEVEATKQRNLVMREQIKQQKMLVRQRKNEIME.

This sequence belongs to the SPC25 family. Component of the Ndc80 complex, which is composed of Ndc80, Nuf2 and Spc25.

The protein resides in the nucleus. It is found in the chromosome. The protein localises to the centromere. It localises to the kinetochore. Acts as a component of the essential kinetochore-associated Ndc80 complex, which is required for chromosome segregation and spindle checkpoint activity during meiosis and mitosis. Required for kinetochore integrity and the organization of stable microtubule binding sites in the outer plate of the kinetochore. Participates in SAC signaling that responds specifically to disruptions in spindle microtubule dynamics. The NDC80 complex synergistically enhances the affinity of the SKA1 complex for microtubules and may allow the NDC80 complex to track depolymerizing microtubules. This Drosophila eugracilis (Fruit fly) protein is Kinetochore protein Spc25.